Here is an 868-residue protein sequence, read N- to C-terminus: Homeobox-leucine zipper protein HOX29 (868 aa).

Positions 9–72 (DASKYVRYTP…NRRCREKQRK (64 aa)) form a DNA-binding region, homeobox. A coiled-coil region spans residues 64–106 (RRCREKQRKESSRLQALNRKLTAMNKLLMEENDRLQKQVSQLV). Residues 150–171 (VTSGHHHQQQQHNVVQPPPRDA) form a disordered region. Residues 169 to 397 (RDASPAGLMS…VAHEDTRSVI (229 aa)) form the START domain.

This sequence belongs to the HD-ZIP homeobox family. Class III subfamily. In terms of tissue distribution, expressed in phloem.

It localises to the nucleus. Functionally, probable transcription factor that may be necessary for the proper patterning of vascular bundles. This chain is Homeobox-leucine zipper protein HOX29 (HOX29), found in Oryza sativa subsp. japonica (Rice).